The primary structure comprises 217 residues: Probable transaldolase (217 aa).

The active-site Schiff-base intermediate with substrate is Lys83.

This sequence belongs to the transaldolase family. Type 3B subfamily.

It localises to the cytoplasm. The enzyme catalyses D-sedoheptulose 7-phosphate + D-glyceraldehyde 3-phosphate = D-erythrose 4-phosphate + beta-D-fructose 6-phosphate. Its pathway is carbohydrate degradation; pentose phosphate pathway; D-glyceraldehyde 3-phosphate and beta-D-fructose 6-phosphate from D-ribose 5-phosphate and D-xylulose 5-phosphate (non-oxidative stage): step 2/3. Functionally, transaldolase is important for the balance of metabolites in the pentose-phosphate pathway. In Roseobacter denitrificans (strain ATCC 33942 / OCh 114) (Erythrobacter sp. (strain OCh 114)), this protein is Probable transaldolase.